The chain runs to 378 residues: N-acetyldiaminopimelate deacetylase (378 aa).

The active site involves aspartate 65. Glutamate 124 acts as the Proton acceptor in catalysis.

Belongs to the peptidase M20A family. N-acetyldiaminopimelate deacetylase subfamily.

It carries out the reaction N-acetyl-(2S,6S)-2,6-diaminopimelate + H2O = (2S,6S)-2,6-diaminopimelate + acetate. It participates in amino-acid biosynthesis; L-lysine biosynthesis via DAP pathway; LL-2,6-diaminopimelate from (S)-tetrahydrodipicolinate (acetylase route): step 3/3. Its function is as follows. Catalyzes the conversion of N-acetyl-diaminopimelate to diaminopimelate and acetate. The chain is N-acetyldiaminopimelate deacetylase from Anoxybacillus flavithermus (strain DSM 21510 / WK1).